We begin with the raw amino-acid sequence, 103 residues long: NADH-quinone oxidoreductase subunit K 1 (103 aa).

Transmembrane regions (helical) follow at residues 7 to 27 (ISWF…GFLF), 31 to 51 (IITV…SFVT), and 63 to 83 (LFTF…LAII).

This sequence belongs to the complex I subunit 4L family. NDH-1 is composed of 14 different subunits. Subunits NuoA, H, J, K, L, M, N constitute the membrane sector of the complex.

It localises to the cell inner membrane. The enzyme catalyses a quinone + NADH + 5 H(+)(in) = a quinol + NAD(+) + 4 H(+)(out). Its function is as follows. NDH-1 shuttles electrons from NADH, via FMN and iron-sulfur (Fe-S) centers, to quinones in the respiratory chain. The immediate electron acceptor for the enzyme in this species is believed to be ubiquinone. Couples the redox reaction to proton translocation (for every two electrons transferred, four hydrogen ions are translocated across the cytoplasmic membrane), and thus conserves the redox energy in a proton gradient. This Solibacter usitatus (strain Ellin6076) protein is NADH-quinone oxidoreductase subunit K 1.